A 163-amino-acid polypeptide reads, in one-letter code: Cyanate hydratase (163 aa).

Catalysis depends on residues Arg103, Glu106, and Ser129.

The protein belongs to the cyanase family.

The enzyme catalyses cyanate + hydrogencarbonate + 3 H(+) = NH4(+) + 2 CO2. In terms of biological role, catalyzes the reaction of cyanate with bicarbonate to produce ammonia and carbon dioxide. This chain is Cyanate hydratase, found in Talaromyces stipitatus (strain ATCC 10500 / CBS 375.48 / QM 6759 / NRRL 1006) (Penicillium stipitatum).